Reading from the N-terminus, the 229-residue chain is Cytidylate kinase (229 aa).

Position 12-20 (12-20 (GPSGSGKGT)) interacts with ATP.

The protein belongs to the cytidylate kinase family. Type 1 subfamily.

The protein localises to the cytoplasm. The catalysed reaction is CMP + ATP = CDP + ADP. It catalyses the reaction dCMP + ATP = dCDP + ADP. The chain is Cytidylate kinase from Pseudomonas fluorescens (strain Pf0-1).